We begin with the raw amino-acid sequence, 375 residues long: DNA replication and repair protein RecF (375 aa).

Residue 30–37 (GENAQGKT) coordinates ATP.

This sequence belongs to the RecF family.

It localises to the cytoplasm. Its function is as follows. The RecF protein is involved in DNA metabolism; it is required for DNA replication and normal SOS inducibility. RecF binds preferentially to single-stranded, linear DNA. It also seems to bind ATP. In Bacillus anthracis (strain A0248), this protein is DNA replication and repair protein RecF.